The chain runs to 162 residues: Nascent polypeptide-associated complex subunit beta (162 aa).

2 disordered regions span residues 1-39 (MPVDPAKLAALQKKSGAQSGGKGTPRRPGKKVAGRNISE) and 130-162 (EQAKKTAGGPDAAKEAGDDEIPNLVENFEDNVE). The segment covering 24-33 (TPRRPGKKVA) has biased composition (basic residues). Residues 38–103 (SEDEKKLSAT…SQQKDIAELI (66 aa)) enclose the NAC-A/B domain. Over residues 146-162 (GDDEIPNLVENFEDNVE) the composition is skewed to acidic residues.

This sequence belongs to the NAC-beta family. As to quaternary structure, part of the nascent polypeptide-associated complex (NAC), consisting of EGD2 and EGD1. NAC associates with ribosomes via EGD1.

It is found in the cytoplasm. The protein localises to the nucleus. In terms of biological role, component of the nascent polypeptide-associated complex (NAC), a dynamic component of the ribosomal exit tunnel, protecting the emerging polypeptides from interaction with other cytoplasmic proteins to ensure appropriate nascent protein targeting. The NAC complex also promotes mitochondrial protein import by enhancing productive ribosome interactions with the outer mitochondrial membrane and blocks the inappropriate interaction of ribosomes translating non-secretory nascent polypeptides with translocation sites in the membrane of the endoplasmic reticulum. EGD1 may act as a transcription factor that exert a negative effect on the expression of several genes that are transcribed by RNA polymerase II. The protein is Nascent polypeptide-associated complex subunit beta (EGD1) of Yarrowia lipolytica (strain CLIB 122 / E 150) (Yeast).